Consider the following 383-residue polypeptide: Cytochrome b (383 aa).

4 consecutive transmembrane segments (helical) span residues 32–52, 76–98, 113–133, and 179–199; these read FGSL…FLAM, WLIR…CHIA, TWSI…LGYV, and FFSL…AHMI. Residues H82 and H96 each coordinate heme b. Heme b-binding residues include H183 and H197. An a ubiquinone-binding site is contributed by H202. Transmembrane regions (helical) follow at residues 225–245, 289–309, 321–341, and 348–368; these read FIFK…IFVC, LLGV…PLTD, LMKL…WIGA, and YLEV…FIVP.

The protein belongs to the cytochrome b family. In terms of assembly, fungal cytochrome b-c1 complex contains 10 subunits; 3 respiratory subunits, 2 core proteins and 5 low-molecular weight proteins. Cytochrome b-c1 complex is a homodimer. Heme b serves as cofactor.

Its subcellular location is the mitochondrion inner membrane. Component of the ubiquinol-cytochrome c reductase complex (complex III or cytochrome b-c1 complex) that is part of the mitochondrial respiratory chain. The b-c1 complex mediates electron transfer from ubiquinol to cytochrome c. Contributes to the generation of a proton gradient across the mitochondrial membrane that is then used for ATP synthesis. The sequence is that of Cytochrome b (cob) from Schizophyllum commune (Split gill fungus).